Here is a 79-residue protein sequence, read N- to C-terminus: MLILTRRPGESLHLGDHIKITVLGVQGKQIKIGLEVPDDMQVYREEVYLRVLEQNRQALCAMDSDVLAAAKLWPKKTNE.

It belongs to the CsrA/RsmA family. Homodimer; the beta-strands of each monomer intercalate to form a hydrophobic core, while the alpha-helices form wings that extend away from the core.

Its subcellular location is the cytoplasm. A translational regulator that binds mRNA to regulate translation initiation and/or mRNA stability. Usually binds in the 5'-UTR at or near the Shine-Dalgarno sequence preventing ribosome-binding, thus repressing translation. Its main target seems to be the major flagellin gene, while its function is anatagonized by FliW. The protein is Translational regulator CsrA of Solidesulfovibrio magneticus (strain ATCC 700980 / DSM 13731 / RS-1) (Desulfovibrio magneticus).